Reading from the N-terminus, the 879-residue chain is Fanconi anemia core complex-associated protein 100 (879 aa).

Belongs to the multisubunit FA complex composed of FANCA, FANCB, FANCC, FANCE, FANCF, FANCG, FANCL/PHF9, FANCM, FAAP24 and FAAP100. Forms a subcomplex with FANCB and FANCL.

The protein localises to the nucleus. In terms of biological role, plays a role in Fanconi anemia-associated DNA damage response network. Regulates FANCD2 monoubiquitination and the stability of the FA core complex. Induces chromosomal instability as well as hypersensitivity to DNA cross-linking agents, when repressed. This is Fanconi anemia core complex-associated protein 100 from Mus musculus (Mouse).